The primary structure comprises 607 residues: Kelch repeat and BTB domain-containing protein 3 (607 aa).

The BTB domain maps to 48–115 (YDFKIIMKEE…AYTGKTRITD (68 aa)). The 101-residue stretch at 150–250 (CLHLLSLSDS…QLSEDTLQDY (101 aa)) folds into the BACK domain. 5 Kelch repeats span residues 291–337 (KYIF…SSYG), 339–390 (KIFL…TPRT), 400–450 (RLFV…ACQN), 452–502 (IYVL…KAVP), and 548–595 (KIYI…VIQF).

The polypeptide is Kelch repeat and BTB domain-containing protein 3 (Mus musculus (Mouse)).